The following is a 264-amino-acid chain: Thiazole synthase (264 aa).

Lysine 106 (schiff-base intermediate with DXP) is an active-site residue. 1-deoxy-D-xylulose 5-phosphate-binding positions include glycine 167, 193-194 (AG), and 215-216 (NS).

Belongs to the ThiG family. Homotetramer. Forms heterodimers with either ThiH or ThiS.

The protein resides in the cytoplasm. It carries out the reaction [ThiS sulfur-carrier protein]-C-terminal-Gly-aminoethanethioate + 2-iminoacetate + 1-deoxy-D-xylulose 5-phosphate = [ThiS sulfur-carrier protein]-C-terminal Gly-Gly + 2-[(2R,5Z)-2-carboxy-4-methylthiazol-5(2H)-ylidene]ethyl phosphate + 2 H2O + H(+). It functions in the pathway cofactor biosynthesis; thiamine diphosphate biosynthesis. In terms of biological role, catalyzes the rearrangement of 1-deoxy-D-xylulose 5-phosphate (DXP) to produce the thiazole phosphate moiety of thiamine. Sulfur is provided by the thiocarboxylate moiety of the carrier protein ThiS. In vitro, sulfur can be provided by H(2)S. This chain is Thiazole synthase, found in Ectopseudomonas mendocina (strain ymp) (Pseudomonas mendocina).